The sequence spans 284 residues: Citrate lyase subunit beta-like protein (284 aa).

Substrate contacts are provided by Arg-74 and Glu-129. Mg(2+) contacts are provided by Glu-129 and Asp-155.

The protein belongs to the HpcH/HpaI aldolase family. Citrate lyase beta subunit-like subfamily. Homotrimer. Mg(2+) serves as cofactor.

Functionally, may play a role in fatty acid biosynthesis. This chain is Citrate lyase subunit beta-like protein, found in Deinococcus radiodurans (strain ATCC 13939 / DSM 20539 / JCM 16871 / CCUG 27074 / LMG 4051 / NBRC 15346 / NCIMB 9279 / VKM B-1422 / R1).